Reading from the N-terminus, the 95-residue chain is Large ribosomal subunit protein bL27 (95 aa).

The interval 1–21 (MAHKKGASSSRNGRDSNAQRL) is disordered. A compositionally biased stretch (polar residues) spans 7–19 (ASSSRNGRDSNAQ).

Belongs to the bacterial ribosomal protein bL27 family.

The sequence is that of Large ribosomal subunit protein bL27 from Parafrankia sp. (strain EAN1pec).